Here is a 359-residue protein sequence, read N- to C-terminus: DNA ligase (359 aa).

ATP contacts are provided by residues 32–35 (EIKY), R39, 55–57 (RVS), and E93. The active-site N6-AMP-lysine intermediate is the K34. E217 contacts a divalent metal cation. ATP is bound by residues K232 and K238.

It belongs to the ATP-dependent DNA ligase family. It depends on a divalent metal cation as a cofactor.

It carries out the reaction ATP + (deoxyribonucleotide)n-3'-hydroxyl + 5'-phospho-(deoxyribonucleotide)m = (deoxyribonucleotide)n+m + AMP + diphosphate.. DNA ligase that seals nicks in double-stranded DNA during DNA replication, DNA recombination and DNA repair in an ATP-dependent reaction. Binds specifically to DNA nicks containing a 3'-OH and a 5'-phosphate group. This chain is DNA ligase, found in Escherichia phage T7 (Bacteriophage T7).